The sequence spans 172 residues: Crossover junction endodeoxyribonuclease RuvC (172 aa).

Active-site residues include Asp-11, Glu-71, and Asp-143. Residues Asp-11, Glu-71, and Asp-143 each contribute to the Mg(2+) site.

It belongs to the RuvC family. As to quaternary structure, homodimer which binds Holliday junction (HJ) DNA. The HJ becomes 2-fold symmetrical on binding to RuvC with unstacked arms; it has a different conformation from HJ DNA in complex with RuvA. In the full resolvosome a probable DNA-RuvA(4)-RuvB(12)-RuvC(2) complex forms which resolves the HJ. It depends on Mg(2+) as a cofactor.

The protein resides in the cytoplasm. The enzyme catalyses Endonucleolytic cleavage at a junction such as a reciprocal single-stranded crossover between two homologous DNA duplexes (Holliday junction).. Its function is as follows. The RuvA-RuvB-RuvC complex processes Holliday junction (HJ) DNA during genetic recombination and DNA repair. Endonuclease that resolves HJ intermediates. Cleaves cruciform DNA by making single-stranded nicks across the HJ at symmetrical positions within the homologous arms, yielding a 5'-phosphate and a 3'-hydroxyl group; requires a central core of homology in the junction. The consensus cleavage sequence is 5'-(A/T)TT(C/G)-3'. Cleavage occurs on the 3'-side of the TT dinucleotide at the point of strand exchange. HJ branch migration catalyzed by RuvA-RuvB allows RuvC to scan DNA until it finds its consensus sequence, where it cleaves and resolves the cruciform DNA. The polypeptide is Crossover junction endodeoxyribonuclease RuvC (Brucella anthropi (strain ATCC 49188 / DSM 6882 / CCUG 24695 / JCM 21032 / LMG 3331 / NBRC 15819 / NCTC 12168 / Alc 37) (Ochrobactrum anthropi)).